The following is a 144-amino-acid chain: Ribosome-binding factor A (144 aa).

The interval 121–144 is disordered; that stretch reads KAQTGVEEPLENTAEGEENPSGGE. Positions 128-138 are enriched in acidic residues; it reads EPLENTAEGEE.

It belongs to the RbfA family. As to quaternary structure, monomer. Binds 30S ribosomal subunits, but not 50S ribosomal subunits or 70S ribosomes.

The protein resides in the cytoplasm. Functionally, one of several proteins that assist in the late maturation steps of the functional core of the 30S ribosomal subunit. Associates with free 30S ribosomal subunits (but not with 30S subunits that are part of 70S ribosomes or polysomes). Required for efficient processing of 16S rRNA. May interact with the 5'-terminal helix region of 16S rRNA. The polypeptide is Ribosome-binding factor A (Synechococcus sp. (strain JA-2-3B'a(2-13)) (Cyanobacteria bacterium Yellowstone B-Prime)).